Consider the following 453-residue polypeptide: Ribosomal protein uS12 methylthiotransferase RimO (453 aa).

One can recognise an MTTase N-terminal domain in the interval 5-120 (PKVGFVSLGC…VMQAVHSHLP (116 aa)). Cys-14, Cys-50, Cys-79, Cys-151, Cys-155, and Cys-158 together coordinate [4Fe-4S] cluster. The Radical SAM core domain occupies 137–382 (LTPRHYAYLK…MEVAEEVSAR (246 aa)). The TRAM domain occupies 385 to 453 (QRKVGKTLKV…ADGHDLWGEV (69 aa)).

The protein belongs to the methylthiotransferase family. RimO subfamily. [4Fe-4S] cluster serves as cofactor.

The protein resides in the cytoplasm. It carries out the reaction L-aspartate(89)-[ribosomal protein uS12]-hydrogen + (sulfur carrier)-SH + AH2 + 2 S-adenosyl-L-methionine = 3-methylsulfanyl-L-aspartate(89)-[ribosomal protein uS12]-hydrogen + (sulfur carrier)-H + 5'-deoxyadenosine + L-methionine + A + S-adenosyl-L-homocysteine + 2 H(+). Functionally, catalyzes the methylthiolation of an aspartic acid residue of ribosomal protein uS12. This chain is Ribosomal protein uS12 methylthiotransferase RimO, found in Burkholderia vietnamiensis (strain G4 / LMG 22486) (Burkholderia cepacia (strain R1808)).